Reading from the N-terminus, the 1026-residue chain is MDAQFEKAIEIAFDPRSSHALKSQALEFLNQVRTDVQAWRICAALFTRSPRASDIVRHVSLEMVNNAVHSQGLDAPDLAFVKNSLLDYITRTYGPNAQDQADPANVQNKLTQTLTYLFVALYGEGWETFFDDFLALTSSQNGASRDNLSGVMLYLRILSSVHDEIADLMISRQGNESKRNNDLKDLIRERHMQKIAMSWQDILAQWTNKHDGVVELTLKVIGKWVSWIDISLVVSQDMQNLILPLVGRVNNTSNNIDTVRDTAIDTLTEIVAKKMGPSHKMELISFLNLGGIITELLASQGLHEFKGTSRYDNDLAEVVAKLLNTIMTDVVRVLEDNKVDAETRAKAERHLQDFLPALLRLFSDEFDEVCSTVIPSLTDLLTFLRRVGTLPDSYSQMLRPILSAIVAKMRYDETSSWGTEDGESDEAEFQELRKRLQILQKSVAAVDQTLYIEFLSNLVGNMFATLEQQGPQMDWRDLDLALHEIYLFGELALPNAGLAHKSEPNVVATERLAVMMSKMVESGIANFPHPAILLQYMEICVRYHAFFESHHQYIAPVLENFVHLIHHEHPRVRTRSWYLFLRFVKQLRAQVGNVAKTVIQSISDLLPIKAEVPSTEAEDDMSSDESDHSADAIFNGQLYLFEAIGCISSTSTTPETDQALYARSVMEPLFSDMSVHLPRAKSGDAQAILQIHHIIMALGTLANGFADPNQSQNPNNQRTPPQAVSAEFSRASEAILVALNELNTNGEIRAACRSAFSRLLGVLGATILPQLPQWIEGLLSQSSSKDEMAFFLRLLEQIVYNFKGEIYNILDLLLTPLLQRVFAGLSEPINGTDDEIQLQELRREYVSFVQVILINELGGVLVSTSNQGVFESLVNSIMTIAKTIVHGNIVASRISFNVLARMAQQWGGPDVATIGENPTANGVPAPAFPGFDQFMLTQFHAACWEVMQDINFRPYADAQTRQILNEITGLEQIIYLKTGEKFISHCQTVTFPAVGMGAEDFLRALTSSTDRKAVMAYLQQLLKSRR.

This sequence belongs to the exportin family.

Its subcellular location is the nucleus. It is found in the cytoplasm. TRNA nucleus export receptor which facilitates tRNA translocation across the nuclear pore complex. Involved in pre-tRNA splicing, probably by affecting the interaction of pre-tRNA with splicing endonuclease. This is Exportin-T (los1) from Neurospora crassa (strain ATCC 24698 / 74-OR23-1A / CBS 708.71 / DSM 1257 / FGSC 987).